A 112-amino-acid chain; its full sequence is MKHSACEHCSTPVEGALRLPRRFGRALIWLYRHTLSPLVGYNCRHLPTCSVYGDEAIERFGLWAGGWMTLARLLRCNPFGTSGIDNVPLAAPQDARWYLPWRYGRWRGVNAP.

The protein belongs to the UPF0161 family.

It is found in the cell inner membrane. In terms of biological role, could be involved in insertion of integral membrane proteins into the membrane. The sequence is that of Putative membrane protein insertion efficiency factor from Bradyrhizobium diazoefficiens (strain JCM 10833 / BCRC 13528 / IAM 13628 / NBRC 14792 / USDA 110).